The sequence spans 496 residues: Histidine--tRNA ligase (496 aa).

This sequence belongs to the class-II aminoacyl-tRNA synthetase family. As to quaternary structure, homodimer.

The protein resides in the cytoplasm. The catalysed reaction is tRNA(His) + L-histidine + ATP = L-histidyl-tRNA(His) + AMP + diphosphate + H(+). The sequence is that of Histidine--tRNA ligase from Bartonella bacilliformis (strain ATCC 35685 / KC583 / Herrer 020/F12,63).